The primary structure comprises 188 residues: METVKVTRKDLLLSPENKEIDSLDDVSALLSQRLSNVFEFSIASEEVQSDEVFEDTYPNDDQATFNLFSDVNTVVTKVTEPSIKNSRPLNYYILEDSPERQRQLQASVFTYDQLMKAKEEKWPACQKLHKVVSIKKEESKHRRRPSKKRRIRMKLLREKEEQLKRQAMAAKRNRFRKNVRKLPNKKKH.

A Phosphoserine modification is found at Ser14. The disordered stretch occupies residues 165 to 188 (RQAMAAKRNRFRKNVRKLPNKKKH). Over residues 171–188 (KRNRFRKNVRKLPNKKKH) the composition is skewed to basic residues.

It is found in the nucleus. It localises to the nucleolus. This is an uncharacterized protein from Schizosaccharomyces pombe (strain 972 / ATCC 24843) (Fission yeast).